Reading from the N-terminus, the 185-residue chain is MINEIKNDAKDRMAKSVESLKTQMSKIRTGRAHPSLLDGIQVEYYGAATPLKQLANVVAEDARTLSISIFDRSMIQAVEKAILTSDLGLNPSSNGQTLRVPLPPLTEERRRDLTKIVRAEAEGARVAVRNIRRDANADLKALLKDKEISEDDDRRAQEEIQKLTDSFIKLVDDALAAKEKELMEI.

Belongs to the RRF family.

It localises to the cytoplasm. Responsible for the release of ribosomes from messenger RNA at the termination of protein biosynthesis. May increase the efficiency of translation by recycling ribosomes from one round of translation to another. The polypeptide is Ribosome-recycling factor (Aeromonas salmonicida (strain A449)).